Consider the following 308-residue polypeptide: Ribosomal RNA large subunit methyltransferase F (308 aa).

Belongs to the methyltransferase superfamily. METTL16/RlmF family.

The protein localises to the cytoplasm. It carries out the reaction adenosine(1618) in 23S rRNA + S-adenosyl-L-methionine = N(6)-methyladenosine(1618) in 23S rRNA + S-adenosyl-L-homocysteine + H(+). Its function is as follows. Specifically methylates the adenine in position 1618 of 23S rRNA. In Salmonella agona (strain SL483), this protein is Ribosomal RNA large subunit methyltransferase F.